We begin with the raw amino-acid sequence, 360 residues long: Uroporphyrinogen decarboxylase (360 aa).

Substrate-binding positions include 31–35, aspartate 81, tyrosine 157, threonine 212, and histidine 333; that span reads RQAGR.

The protein belongs to the uroporphyrinogen decarboxylase family. Homodimer.

It localises to the cytoplasm. It catalyses the reaction uroporphyrinogen III + 4 H(+) = coproporphyrinogen III + 4 CO2. Its pathway is porphyrin-containing compound metabolism; protoporphyrin-IX biosynthesis; coproporphyrinogen-III from 5-aminolevulinate: step 4/4. Catalyzes the decarboxylation of four acetate groups of uroporphyrinogen-III to yield coproporphyrinogen-III. The polypeptide is Uroporphyrinogen decarboxylase (Janthinobacterium sp. (strain Marseille) (Minibacterium massiliensis)).